Consider the following 875-residue polypeptide: Probable ubiquitin carboxyl-terminal hydrolase 7 (875 aa).

The segment at 54-167 (KECSHLKKGV…RDVQQFICSN (114 aa)) adopts a UBP-type zinc-finger fold. Positions 56, 58, 83, 86, 101, 104, 109, 116, 120, 127, 140, and 143 each coordinate Zn(2+). Residues 208–875 (PGLKNLGATC…EAYMLFYERV (668 aa)) enclose the USP domain. Catalysis depends on Cys-217, which acts as the Nucleophile. Phosphoserine is present on residues Ser-333 and Ser-337. The disordered stretch occupies residues 396–486 (YSKELSQSSD…ASPKKEVLKS (91 aa)). Positions 401-438 (SQSSDSSQHQHDSFLPANSSPLAASSTKSLPSSELLDS) are enriched in low complexity. The span at 473 to 484 (NHEEASPKKEVL) shows a compositional bias: basic and acidic residues. Phosphoserine occurs at positions 486 and 493. Over residues 575–586 (RSRFSRSPKKSS) the composition is skewed to basic residues. A disordered region spans residues 575-628 (RSRFSRSPKKSSVKIVVDNANDDTDQAPTTNSSSLNENLLGGHASENDKSLKQS). Polar residues predominate over residues 600–611 (QAPTTNSSSLNE). Ser-645 bears the Phosphoserine mark. The Proton acceptor role is filled by His-812.

The protein belongs to the peptidase C19 family.

The catalysed reaction is Thiol-dependent hydrolysis of ester, thioester, amide, peptide and isopeptide bonds formed by the C-terminal Gly of ubiquitin (a 76-residue protein attached to proteins as an intracellular targeting signal).. This chain is Probable ubiquitin carboxyl-terminal hydrolase 7 (ubp7), found in Schizosaccharomyces pombe (strain 972 / ATCC 24843) (Fission yeast).